Consider the following 314-residue polypeptide: Methionyl-tRNA formyltransferase (314 aa).

(6S)-5,6,7,8-tetrahydrofolate is bound at residue 113 to 116 (SLLP).

This sequence belongs to the Fmt family.

It catalyses the reaction L-methionyl-tRNA(fMet) + (6R)-10-formyltetrahydrofolate = N-formyl-L-methionyl-tRNA(fMet) + (6S)-5,6,7,8-tetrahydrofolate + H(+). In terms of biological role, attaches a formyl group to the free amino group of methionyl-tRNA(fMet). The formyl group appears to play a dual role in the initiator identity of N-formylmethionyl-tRNA by promoting its recognition by IF2 and preventing the misappropriation of this tRNA by the elongation apparatus. In Pseudomonas savastanoi pv. phaseolicola (strain 1448A / Race 6) (Pseudomonas syringae pv. phaseolicola (strain 1448A / Race 6)), this protein is Methionyl-tRNA formyltransferase.